Reading from the N-terminus, the 272-residue chain is Orotidine 5'-phosphate decarboxylase (272 aa).

K95 functions as the Proton donor in the catalytic mechanism.

The protein belongs to the OMP decarboxylase family. Type 2 subfamily.

The enzyme catalyses orotidine 5'-phosphate + H(+) = UMP + CO2. It participates in pyrimidine metabolism; UMP biosynthesis via de novo pathway; UMP from orotate: step 2/2. The chain is Orotidine 5'-phosphate decarboxylase from Bordetella avium (strain 197N).